The following is a 238-amino-acid chain: uncharacterized protein (238 aa).

5 helical membrane passes run 6 to 26, 45 to 65, 98 to 118, 160 to 180, and 186 to 206; these read METLIRLFVSILIICVLALMI, FILLYFCGFKYLILLLSFFIL, IPILFAILAIFGFNWALIGYI, IFGTLAGVLGAFLIGLFGYLL, and IVLCGTAGGIAGNLADSLVGA.

Belongs to the TMEM19 family.

The protein resides in the cell membrane. This is an uncharacterized protein from Methanocaldococcus jannaschii (strain ATCC 43067 / DSM 2661 / JAL-1 / JCM 10045 / NBRC 100440) (Methanococcus jannaschii).